A 511-amino-acid polypeptide reads, in one-letter code: NADH-ubiquinone oxidoreductase chain 4 (511 aa).

A run of 14 helical transmembrane segments spans residues 1-21 (MNQI…IIII), 39-59 (ISLL…YLFN), 78-98 (IDGI…ISLI), 116-136 (VLLI…LDLI), 137-157 (TFYI…GKLG), 186-206 (YIFI…GIYI), 220-240 (IILS…GILV), 264-284 (IILA…LILI), 289-309 (VIII…FYIG), 318-338 (IKVI…MSIF), 349-369 (LLIS…VGGI), 388-408 (YMPI…GIPL), 422-442 (IFIY…ITTI), and 476-496 (LLLN…NLII).

It belongs to the complex I subunit 4 family.

It localises to the mitochondrion membrane. It catalyses the reaction a ubiquinone + NADH + 5 H(+)(in) = a ubiquinol + NAD(+) + 4 H(+)(out). Functionally, core subunit of the mitochondrial membrane respiratory chain NADH dehydrogenase (Complex I) that is believed to belong to the minimal assembly required for catalysis. Complex I functions in the transfer of electrons from NADH to the respiratory chain. The immediate electron acceptor for the enzyme is believed to be ubiquinone. This chain is NADH-ubiquinone oxidoreductase chain 4 (ND4), found in Wickerhamomyces canadensis (Yeast).